Here is a 158-residue protein sequence, read N- to C-terminus: C-type lectin galactose-binding isoform (158 aa).

The N-terminal stretch at 1–20 (MGRFLLVTLSLLVVAFSLNG) is a signal peptide. Intrachain disulfides connect C26–C37, C54–C154, and C129–C146. One can recognise a C-type lectin domain in the interval 33 to 155 (KNGYCYKVFK…CTALRPFLCQ (123 aa)). Ca(2+)-binding residues include Q119, D121, E127, N142, and D143. Positions 119–121 (QPD) match the Galactose-binding motif.

This sequence belongs to the true venom lectin family. Homodimer; disulfide-linked. Expressed by the venom gland.

It is found in the secreted. Galactose-binding lectin that binds to and agglutinates erythrocytes in a calcium-dependent manner. The sequence is that of C-type lectin galactose-binding isoform from Hoplocephalus stephensii (Stephens's banded snake).